The sequence spans 269 residues: Iron(3+)-hydroxamate import ATP-binding protein FhuC (269 aa).

An ABC transporter domain is found at 4-240; sequence LSTEQLGIGY…DILKQVFQID (237 aa). Residues 36–43 and 160–171 contribute to the ATP site; these read GPNGCGKS and LLLLDEPTTYLD.

Belongs to the ABC transporter superfamily. Iron (Fe3+)-hydroxamate importer (TC 3.A.1.14.7) family. In terms of assembly, the complex is composed of an ATP-binding protein (FhuC), two transmembrane proteins (FhuB and FhuG) and a solute-binding protein (FhuD or YxeB).

It localises to the cell membrane. The enzyme catalyses ATP + H2O + Fe(3+)-hydroxamate complex-[hydroxamate-binding protein]Side 1 = ADP + phosphate + Fe(3+)-hydroxamate complexSide 2 + [hydroxamate-binding protein]Side 1.. Part of the ABC transporter complex FhuBGCD involved in iron(3+)-hydroxamate import. Responsible for energy coupling to the transport system. The protein is Iron(3+)-hydroxamate import ATP-binding protein FhuC (fhuC) of Bacillus subtilis (strain 168).